A 628-amino-acid chain; its full sequence is Biosynthetic arginine decarboxylase (628 aa).

Residue K99 is modified to N6-(pyridoxal phosphate)lysine. 279–289 (VDVGGGLGIDY) serves as a coordination point for substrate.

Belongs to the Orn/Lys/Arg decarboxylase class-II family. SpeA subfamily. Mg(2+) serves as cofactor. The cofactor is pyridoxal 5'-phosphate.

It carries out the reaction L-arginine + H(+) = agmatine + CO2. Its function is as follows. Catalyzes the biosynthesis of agmatine from arginine. This chain is Biosynthetic arginine decarboxylase, found in Xanthomonas axonopodis pv. citri (strain 306).